A 134-amino-acid chain; its full sequence is Putative pre-16S rRNA nuclease (134 aa).

It belongs to the YqgF nuclease family.

The protein resides in the cytoplasm. Functionally, could be a nuclease involved in processing of the 5'-end of pre-16S rRNA. This is Putative pre-16S rRNA nuclease from Helicobacter pylori (strain G27).